Reading from the N-terminus, the 184-residue chain is Holliday junction branch migration complex subunit RuvA (184 aa).

The domain I stretch occupies residues 1 to 62; that stretch reads MIVGLVGEVL…EDSESLYGFV (62 aa). A domain II region spans residues 63 to 134; it reads DINEKKMFDR…ELGEFDISES (72 aa). Residues 134–135 are flexible linker; it reads SN. Positions 136 to 184 are domain III; the sequence is VTSSAFQEASMALQSLGFKKEQIQKALQECTATDTASLVKEALKKIQKL.

It belongs to the RuvA family. As to quaternary structure, homotetramer. Forms an RuvA(8)-RuvB(12)-Holliday junction (HJ) complex. HJ DNA is sandwiched between 2 RuvA tetramers; dsDNA enters through RuvA and exits via RuvB. An RuvB hexamer assembles on each DNA strand where it exits the tetramer. Each RuvB hexamer is contacted by two RuvA subunits (via domain III) on 2 adjacent RuvB subunits; this complex drives branch migration. In the full resolvosome a probable DNA-RuvA(4)-RuvB(12)-RuvC(2) complex forms which resolves the HJ.

It is found in the cytoplasm. Functionally, the RuvA-RuvB-RuvC complex processes Holliday junction (HJ) DNA during genetic recombination and DNA repair, while the RuvA-RuvB complex plays an important role in the rescue of blocked DNA replication forks via replication fork reversal (RFR). RuvA specifically binds to HJ cruciform DNA, conferring on it an open structure. The RuvB hexamer acts as an ATP-dependent pump, pulling dsDNA into and through the RuvAB complex. HJ branch migration allows RuvC to scan DNA until it finds its consensus sequence, where it cleaves and resolves the cruciform DNA. This chain is Holliday junction branch migration complex subunit RuvA, found in Nitratiruptor sp. (strain SB155-2).